A 347-amino-acid polypeptide reads, in one-letter code: Protein PET130 (347 aa).

Its subcellular location is the mitochondrion matrix. The protein is Protein PET130 (PET130) of Saccharomyces cerevisiae (strain ATCC 204508 / S288c) (Baker's yeast).